An 813-amino-acid chain; its full sequence is G-type lectin S-receptor-like serine/threonine-protein kinase LECRK1 (813 aa).

The N-terminal stretch at 1–19 is a signal peptide; the sequence is MVALLLFPMLLQLLSPTCA. Residues 20-466 are Extracellular-facing; sequence QTQKNITLGS…NRKHWVLGSS (447 aa). The Bulb-type lectin domain occupies 22-149; that stretch reads QKNITLGSTL…DGTTKWQTFD (128 aa). Residues asparagine 24, asparagine 57, asparagine 164, asparagine 168, asparagine 219, and asparagine 242 are each glycosylated (N-linked (GlcNAc...) asparagine). Positions 293 to 346 constitute an EGF-like; atypical domain; that stretch reads PQNICHAIVSDVGSGVCGFNSYCTFDGTRNQIASCQCPPWYKFFDEQKKYKGCK. Cystine bridges form between cysteine 297–cysteine 315, cysteine 309–cysteine 327, cysteine 329–cysteine 345, cysteine 391–cysteine 413, and cysteine 395–cysteine 401. In terms of domain architecture, PAN spans 354-433; it reads CDLEEATALA…NMADYVQRTV (80 aa). Asparagine 407 and asparagine 441 each carry an N-linked (GlcNAc...) asparagine glycan. The helical transmembrane segment at 467-487 threads the bilayer; sequence LILGTSILVNFALISIFLFGT. Over 488 to 813 the chain is Cytoplasmic; sequence YCRITTKKNI…DPCSFISSLP (326 aa). The 275-residue stretch at 523-797 folds into the Protein kinase domain; the sequence is AGFHEILGAG…KVTQMLDGAV (275 aa). ATP is bound by residues 529–537 and lysine 553; that span reads LGAGASGVV. Aspartate 647 acts as the Proton acceptor in catalysis.

This sequence belongs to the protein kinase superfamily. Ser/Thr protein kinase family. In terms of assembly, interacts (via kinase domain) with ADF4. Expressed in plumules, radicles and panicles.

Its subcellular location is the membrane. It catalyses the reaction L-seryl-[protein] + ATP = O-phospho-L-seryl-[protein] + ADP + H(+). The catalysed reaction is L-threonyl-[protein] + ATP = O-phospho-L-threonyl-[protein] + ADP + H(+). Its function is as follows. Involved in innate immunity. Required for the expression of defense-related genes PR1A, LOX2 and CHS1 upon biotic stresses. Required for basal resistance to the fungal blast (M.grisea), bacterial blight (O.oryzae pv. oryzae, Xoo) and the herbivorous insect brown planthopper (N.lugens, BPH). May be involved in several defense signaling pathways. Involved in the promotion of seed germination. Required for the expression of alpha-amylase genes during seed germination. Involved in resistance against the brown planthopper (BPH). Member of the BPH3 (BPH resistance locus 3) cluster which contains LECRK1, LECRK2 and LECRK3. This chain is G-type lectin S-receptor-like serine/threonine-protein kinase LECRK1, found in Oryza sativa subsp. indica (Rice).